A 237-amino-acid chain; its full sequence is Octanoyltransferase (237 aa).

Residues 27 to 210 (SGGDDILLLL…EFYHIFQPAG (184 aa)) form the BPL/LPL catalytic domain. Substrate is bound by residues 72–79 (RGGNVTCH), 139–141 (SLG), and 152–154 (GMA). Residue C170 is the Acyl-thioester intermediate of the active site.

The protein belongs to the LipB family.

It localises to the cytoplasm. The catalysed reaction is octanoyl-[ACP] + L-lysyl-[protein] = N(6)-octanoyl-L-lysyl-[protein] + holo-[ACP] + H(+). It functions in the pathway protein modification; protein lipoylation via endogenous pathway; protein N(6)-(lipoyl)lysine from octanoyl-[acyl-carrier-protein]: step 1/2. In terms of biological role, catalyzes the transfer of endogenously produced octanoic acid from octanoyl-acyl-carrier-protein onto the lipoyl domains of lipoate-dependent enzymes. Lipoyl-ACP can also act as a substrate although octanoyl-ACP is likely to be the physiological substrate. The protein is Octanoyltransferase of Desulfovibrio desulfuricans (strain ATCC 27774 / DSM 6949 / MB).